Consider the following 583-residue polypeptide: Chromosomal replication initiator protein DnaA (583 aa).

The interval 1–91 (MNAENLDPAT…SPMFPAFKVM (91 aa)) is domain I, interacts with DnaA modulators. Disordered regions lie at residues 86-179 (PAFK…QQPV) and 197-232 (VAGF…NYRD). A domain II region spans residues 91-235 (MPPAQPEPQT…VTGNYRDPVT (145 aa)). The span at 97-106 (EPQTTASPED) shows a compositional bias: polar residues. 2 stretches are compositionally biased toward basic and acidic residues: residues 126–135 (EDSRTPRHSA) and 147–174 (QERE…EHEP). The span at 205 to 226 (AGTTAPQYPPQSEMQGSFTPGV) shows a compositional bias: polar residues. The tract at residues 236-460 (HLNSNDTFDT…GALKRVIAMA (225 aa)) is domain III, AAA+ region. Glycine 280, glycine 282, lysine 283, and threonine 284 together coordinate ATP. The segment at 461 to 583 (SLNHQPVTRA…TVELKQHLND (123 aa)) is domain IV, binds dsDNA.

Belongs to the DnaA family. In terms of assembly, oligomerizes as a right-handed, spiral filament on DNA at oriC.

The protein resides in the cytoplasm. In terms of biological role, plays an essential role in the initiation and regulation of chromosomal replication. ATP-DnaA binds to the origin of replication (oriC) to initiate formation of the DNA replication initiation complex once per cell cycle. Binds the DnaA box (a 9 base pair repeat at the origin) and separates the double-stranded (ds)DNA. Forms a right-handed helical filament on oriC DNA; dsDNA binds to the exterior of the filament while single-stranded (ss)DNA is stabiized in the filament's interior. The ATP-DnaA-oriC complex binds and stabilizes one strand of the AT-rich DNA unwinding element (DUE), permitting loading of DNA polymerase. After initiation quickly degrades to an ADP-DnaA complex that is not apt for DNA replication. Binds acidic phospholipids. In Bifidobacterium animalis subsp. lactis (strain AD011), this protein is Chromosomal replication initiator protein DnaA.